The following is a 619-amino-acid chain: ATP-dependent RNA helicase abstrakt (619 aa).

Positions 1-11 are enriched in basic residues; that stretch reads MAHVKRYRRSS. Disordered regions lie at residues 1-25 and 50-69; these read MAHV…EDYV and ETAQ…SQGA. Ser-11, Ser-13, Ser-14, Ser-56, Ser-57, Ser-58, and Ser-66 each carry phosphoserine. The Q motif motif lies at 177-205; that stretch reads RSFREMKFPKGILNGLAAKGIKNPTPIQV. Positions 208–392 constitute a Helicase ATP-binding domain; sequence LPTVLAGRDL…RSALVKPVTI (185 aa). Residue 221 to 228 coordinates ATP; that stretch reads AFTGSGKT. Residues 340–343 carry the DEAD box motif; it reads DEAD. Residues 403 to 563 enclose the Helicase C-terminal domain; it reads NVTQQVEYVK…EVPDFLDELA (161 aa). The CCHC-type zinc finger occupies 577–594; sequence HGCTYCGGLGHRITECPK.

The protein belongs to the DEAD box helicase family. DDX41 subfamily.

Its subcellular location is the nucleus. It catalyses the reaction ATP + H2O = ADP + phosphate + H(+). Its function is as follows. ATP-dependent RNA helicase. Is essential for the directed and fasciculated early outgrowth of the bolwig nerves, as well as for its navigation at later stages. Is required during post-transcriptional gene expression. Plays a role during morphogenetic process, apoptosis and the establishment of cell polarity. This is ATP-dependent RNA helicase abstrakt (abs) from Drosophila melanogaster (Fruit fly).